Here is a 320-residue protein sequence, read N- to C-terminus: Adenosine receptor A3 (320 aa).

At 1–16 the chain is on the extracellular side; sequence MKANNTTTSALWLQIT. N-linked (GlcNAc...) asparagine glycans are attached at residues Asn-4 and Asn-5. Residues 17–39 traverse the membrane as a helical segment; that stretch reads YITMEAAIGLCAVVGNMLVIWVV. Over 40-50 the chain is Cytoplasmic; it reads KLNRTLRTTTF. A helical membrane pass occupies residues 51-74; sequence YFIVSLALADIAVGVLVIPLAIAV. Topologically, residues 75–86 are extracellular; sequence SLEVQMHFYACL. An intrachain disulfide couples Cys-85 to Cys-168. Residues 87 to 108 traverse the membrane as a helical segment; the sequence is FMSCVLLVFTHASIMSLLAIAV. Residues 109–128 are Cytoplasmic-facing; it reads DRYLRVKLTVRYRTVTTQRR. A helical transmembrane segment spans residues 129–150; sequence IWLFLGLCWLVSFLVGLTPMFG. The Extracellular portion of the chain corresponds to 151–179; that stretch reads WNRKVTLELSQNSSTLSCHFRSVVGLDYM. The chain crosses the membrane as a helical span at residues 180 to 200; it reads VFFSFITWILIPLVVMCIIYL. Topologically, residues 201-233 are cytoplasmic; sequence DIFYIIRNKLSQNLTGFRETRAFYGREFKTAKS. A helical transmembrane segment spans residues 234 to 257; sequence LFLVLFLFALCWLPLSIINFVSYF. Over 258 to 263 the chain is Extracellular; sequence NVKIPE. Residues 264 to 286 form a helical membrane-spanning segment; sequence IAMCLGILLSHANSMMNPIVYAC. Residues 287–320 lie on the Cytoplasmic side of the membrane; sequence KIKKFKETYFVILRACRLCQTSDSLDSNLEQTTE. The S-palmitoyl cysteine moiety is linked to residue Cys-305. Phosphothreonine is present on residues Thr-307, Thr-318, and Thr-319.

The protein belongs to the G-protein coupled receptor 1 family. In terms of processing, phosphorylation on Thr-318 and Thr-319 may be crucial for rapid desensitization. Phosphorylation on Thr-318 may be necessary for phosphorylation on Thr-319 to occur. Testis, particularly in spermatocytes and spermatids but not in spermatogonia. Low levels in the brain.

The protein resides in the cell membrane. Its function is as follows. Receptor for adenosine. The activity of this receptor is mediated by G proteins which inhibits adenylyl cyclase. May play a role during reproduction. This is Adenosine receptor A3 (Adora3) from Rattus norvegicus (Rat).